A 276-amino-acid chain; its full sequence is Large ribosomal subunit protein uL2 (276 aa).

Positions 203 to 276 are disordered; sequence NVSSGKAGRT…SDKFIVKRRK (74 aa). Over residues 210–220 the composition is skewed to basic residues; that stretch reads GRTRWLGRRPQ. Positions 265 to 276 are enriched in basic and acidic residues; the sequence is KPSDKFIVKRRK.

The protein belongs to the universal ribosomal protein uL2 family. As to quaternary structure, part of the 50S ribosomal subunit. Forms a bridge to the 30S subunit in the 70S ribosome.

Its function is as follows. One of the primary rRNA binding proteins. Required for association of the 30S and 50S subunits to form the 70S ribosome, for tRNA binding and peptide bond formation. It has been suggested to have peptidyltransferase activity; this is somewhat controversial. Makes several contacts with the 16S rRNA in the 70S ribosome. The protein is Large ribosomal subunit protein uL2 of Coprothermobacter proteolyticus (strain ATCC 35245 / DSM 5265 / OCM 4 / BT).